Reading from the N-terminus, the 179-residue chain is ATP synthase subunit delta (179 aa).

The protein belongs to the ATPase delta chain family. In terms of assembly, F-type ATPases have 2 components, F(1) - the catalytic core - and F(0) - the membrane proton channel. F(1) has five subunits: alpha(3), beta(3), gamma(1), delta(1), epsilon(1). F(0) has three main subunits: a(1), b(2) and c(10-14). The alpha and beta chains form an alternating ring which encloses part of the gamma chain. F(1) is attached to F(0) by a central stalk formed by the gamma and epsilon chains, while a peripheral stalk is formed by the delta and b chains.

It localises to the cell inner membrane. F(1)F(0) ATP synthase produces ATP from ADP in the presence of a proton or sodium gradient. F-type ATPases consist of two structural domains, F(1) containing the extramembraneous catalytic core and F(0) containing the membrane proton channel, linked together by a central stalk and a peripheral stalk. During catalysis, ATP synthesis in the catalytic domain of F(1) is coupled via a rotary mechanism of the central stalk subunits to proton translocation. In terms of biological role, this protein is part of the stalk that links CF(0) to CF(1). It either transmits conformational changes from CF(0) to CF(1) or is implicated in proton conduction. In Koribacter versatilis (strain Ellin345), this protein is ATP synthase subunit delta.